Consider the following 208-residue polypeptide: Probable GTP-binding protein EngB (208 aa).

The 183-residue stretch at Leu23 to Thr205 folds into the EngB-type G domain. Residues Gly31–Ser38, Gly57–Leu61, Asp84–Gly87, Thr154–Asp157, and Phe182–Ala184 contribute to the GTP site. Mg(2+) contacts are provided by Ser38 and Thr59.

It belongs to the TRAFAC class TrmE-Era-EngA-EngB-Septin-like GTPase superfamily. EngB GTPase family. Mg(2+) is required as a cofactor.

In terms of biological role, necessary for normal cell division and for the maintenance of normal septation. This is Probable GTP-binding protein EngB from Helicobacter pylori (strain Shi470).